Consider the following 221-residue polypeptide: UPF0758 protein PC1_4100 (221 aa).

Positions 99 to 221 (AMLNPQATGQ…YVSFAERGWI (123 aa)) constitute an MPN domain. Zn(2+) contacts are provided by His-170, His-172, and Asp-183. A JAMM motif motif is present at residues 170-183 (HNHPSGKAEPSQAD).

The protein belongs to the UPF0758 family. YicR subfamily.

This Pectobacterium carotovorum subsp. carotovorum (strain PC1) protein is UPF0758 protein PC1_4100.